Reading from the N-terminus, the 271-residue chain is Thiamine thiazole synthase (271 aa).

Residues serine 39, 58–59 (ER), glycine 66, valine 130, and 158–160 (HVD) each bind NAD(+). Fe cation-binding residues include aspartate 160 and histidine 175. Residue methionine 225 coordinates NAD(+). Arginine 235 contacts glycine.

This sequence belongs to the THI4 family. In terms of assembly, homooctamer; tetramer of dimers. Fe(2+) serves as cofactor.

The catalysed reaction is hydrogen sulfide + glycine + NAD(+) = ADP-5-ethyl-4-methylthiazole-2-carboxylate + nicotinamide + 3 H2O + H(+). It participates in cofactor biosynthesis; thiamine diphosphate biosynthesis. In terms of biological role, involved in the biosynthesis of the thiazole moiety of thiamine. Catalyzes the conversion of NAD and glycine to adenosine diphosphate 5-(2-hydroxyethyl)-4-methylthiazole-2-carboxylate (ADT), an adenylated thiazole intermediate, using free sulfide as a source of sulfur. In Metallosphaera sedula (strain ATCC 51363 / DSM 5348 / JCM 9185 / NBRC 15509 / TH2), this protein is Thiamine thiazole synthase.